The primary structure comprises 99 residues: Small ribosomal subunit protein bS20 (99 aa).

The protein belongs to the bacterial ribosomal protein bS20 family.

Its function is as follows. Binds directly to 16S ribosomal RNA. The polypeptide is Small ribosomal subunit protein bS20 (Caldicellulosiruptor saccharolyticus (strain ATCC 43494 / DSM 8903 / Tp8T 6331)).